A 367-amino-acid chain; its full sequence is Glutamate 5-kinase (367 aa).

K9 provides a ligand contact to ATP. S49, D136, and N148 together coordinate substrate. ATP is bound by residues 168–169 and 210–216; these read TD and TGGMKSK. The PUA domain occupies 276–350; it reads SGQIEVDAGA…GMQSQDIQVR (75 aa).

The protein belongs to the glutamate 5-kinase family.

The protein localises to the cytoplasm. The enzyme catalyses L-glutamate + ATP = L-glutamyl 5-phosphate + ADP. It functions in the pathway amino-acid biosynthesis; L-proline biosynthesis; L-glutamate 5-semialdehyde from L-glutamate: step 1/2. Functionally, catalyzes the transfer of a phosphate group to glutamate to form L-glutamate 5-phosphate. This is Glutamate 5-kinase from Bacillus cereus (strain B4264).